Reading from the N-terminus, the 140-residue chain is Nucleoside diphosphate kinase (140 aa).

ATP contacts are provided by lysine 11, phenylalanine 59, arginine 87, threonine 93, arginine 104, and asparagine 114. Histidine 117 serves as the catalytic Pros-phosphohistidine intermediate.

Belongs to the NDK family. In terms of assembly, homotetramer. It depends on Mg(2+) as a cofactor.

The protein resides in the cytoplasm. It catalyses the reaction a 2'-deoxyribonucleoside 5'-diphosphate + ATP = a 2'-deoxyribonucleoside 5'-triphosphate + ADP. The enzyme catalyses a ribonucleoside 5'-diphosphate + ATP = a ribonucleoside 5'-triphosphate + ADP. Functionally, major role in the synthesis of nucleoside triphosphates other than ATP. The ATP gamma phosphate is transferred to the NDP beta phosphate via a ping-pong mechanism, using a phosphorylated active-site intermediate. This Acidiphilium cryptum (strain JF-5) protein is Nucleoside diphosphate kinase.